The following is a 96-amino-acid chain: Co-chaperonin GroES (96 aa).

The protein belongs to the GroES chaperonin family. In terms of assembly, heptamer of 7 subunits arranged in a ring. Interacts with the chaperonin GroEL.

The protein localises to the cytoplasm. In terms of biological role, together with the chaperonin GroEL, plays an essential role in assisting protein folding. The GroEL-GroES system forms a nano-cage that allows encapsulation of the non-native substrate proteins and provides a physical environment optimized to promote and accelerate protein folding. GroES binds to the apical surface of the GroEL ring, thereby capping the opening of the GroEL channel. This Dechloromonas aromatica (strain RCB) protein is Co-chaperonin GroES.